The sequence spans 271 residues: Aspartate/glutamate leucyltransferase (271 aa).

The protein belongs to the R-transferase family. Bpt subfamily.

It is found in the cytoplasm. The enzyme catalyses N-terminal L-glutamyl-[protein] + L-leucyl-tRNA(Leu) = N-terminal L-leucyl-L-glutamyl-[protein] + tRNA(Leu) + H(+). The catalysed reaction is N-terminal L-aspartyl-[protein] + L-leucyl-tRNA(Leu) = N-terminal L-leucyl-L-aspartyl-[protein] + tRNA(Leu) + H(+). Functionally, functions in the N-end rule pathway of protein degradation where it conjugates Leu from its aminoacyl-tRNA to the N-termini of proteins containing an N-terminal aspartate or glutamate. This Acinetobacter baumannii (strain SDF) protein is Aspartate/glutamate leucyltransferase.